The primary structure comprises 472 residues: NADH-quinone oxidoreductase subunit N (472 aa).

A run of 14 helical transmembrane segments spans residues 5 to 25 (LLTT…IGLL), 36 to 56 (AYAA…QYGI), 77 to 97 (IFLV…DGLP), 103 to 123 (FYAL…ANDL), 126 to 146 (LYVG…YILG), 158 to 178 (LLLG…LYGL), 197 to 217 (LAIA…AVPF), 229 to 249 (PTPV…AVLV), 264 to 284 (WLTV…VVAI), 292 to 309 (MLAY…VGLM), 319 to 339 (ILFY…VATA), 363 to 383 (ASVM…AGFV), 396 to 416 (GVLW…YYYL), and 441 to 461 (LTVI…GPLA).

This sequence belongs to the complex I subunit 2 family. As to quaternary structure, NDH-1 is composed of 14 different subunits. Subunits NuoA, H, J, K, L, M, N constitute the membrane sector of the complex.

The protein localises to the cell membrane. The catalysed reaction is a quinone + NADH + 5 H(+)(in) = a quinol + NAD(+) + 4 H(+)(out). Its function is as follows. NDH-1 shuttles electrons from NADH, via FMN and iron-sulfur (Fe-S) centers, to quinones in the respiratory chain. The immediate electron acceptor for the enzyme in this species is believed to be a menaquinone. Couples the redox reaction to proton translocation (for every two electrons transferred, four hydrogen ions are translocated across the cytoplasmic membrane), and thus conserves the redox energy in a proton gradient. The protein is NADH-quinone oxidoreductase subunit N of Heliobacterium modesticaldum (strain ATCC 51547 / Ice1).